Here is a 149-residue protein sequence, read N- to C-terminus: Protein E6 (149 aa).

Zinc fingers lie at residues 30–66 (CVYCKQELQRSEVYDFACYDLCIVYREGQPYGVCMKC) and 103–139 (CITCQKPLCPVEKQRHLEEKKRFHNIGGRWTGRCMSC). The PDZ-binding domain signature appears at 147 to 149 (TEV).

This sequence belongs to the papillomaviridae E6 protein family. In terms of assembly, forms homodimers. Interacts with ubiquitin-protein ligase UBE3A/E6-AP and thus forms a complex with human TP53. Interacts with human NFX1 and MAGI3. Interacts with human IRF3; this interaction inhibits the establishment of antiviral state. Interacts with human TYK2; this interaction inhibits JAK-STAT activation by interferon alpha. Interacts with host DLG1; this interaction leads to the proteasomal degradation of DLG1.

The protein resides in the host cytoplasm. It localises to the host nucleus. Functionally, this protein may be involved in the oncogenic potential of this virus (associated with cancer of the uterine cervix). Plays a major role in the induction and maintenance of cellular transformation. Acts mainly as an oncoprotein by stimulating the destruction of many host cell key regulatory proteins. E6 associates with host UBE3A/E6-AP ubiquitin-protein ligase, and inactivates tumor suppressors TP53 and TP73 by targeting them to the 26S proteasome for degradation. In turn, DNA damage and chromosomal instabilities increase and lead to cell proliferation and cancer development. The complex E6/E6AP targets several other substrates to degradation via the proteasome including host DLG1 or NFX1, a repressor of human telomerase reverse transcriptase (hTERT). The resulting increased expression of hTERT prevents the shortening of telomere length leading to cell immortalization. Other cellular targets including BAK1, Fas-associated death domain-containing protein (FADD) and procaspase 8, are degraded by E6/E6AP causing inhibition of apoptosis. E6 also inhibits immune response by interacting with host IRF3 and TYK2. These interactions prevent IRF3 transcriptional activities and inhibit TYK2-mediated JAK-STAT activation by interferon alpha resulting in inhibition of the interferon signaling pathway. The protein is Protein E6 of Human papillomavirus 35.